A 450-amino-acid polypeptide reads, in one-letter code: 23S rRNA (uracil(1939)-C(5))-methyltransferase RlmD (450 aa).

The region spanning 15-73 is the TRAM domain; sequence KAVPAKNLTVTVASLDPFGQGVARHEGKTVFVTGVLPGEQAEVQLTEEKRQFSHAKLKR. [4Fe-4S] cluster is bound by residues Cys-86, Cys-92, Cys-95, and Cys-173. Gln-276, Phe-305, Asn-310, Glu-326, Asn-353, and Asp-374 together coordinate S-adenosyl-L-methionine. Residue Cys-400 is the Nucleophile of the active site.

It belongs to the class I-like SAM-binding methyltransferase superfamily. RNA M5U methyltransferase family. RlmD subfamily.

The catalysed reaction is uridine(1939) in 23S rRNA + S-adenosyl-L-methionine = 5-methyluridine(1939) in 23S rRNA + S-adenosyl-L-homocysteine + H(+). Catalyzes the formation of 5-methyl-uridine at position 1939 (m5U1939) in 23S rRNA. The sequence is that of 23S rRNA (uracil(1939)-C(5))-methyltransferase RlmD from Pectobacterium atrosepticum (strain SCRI 1043 / ATCC BAA-672) (Erwinia carotovora subsp. atroseptica).